A 405-amino-acid polypeptide reads, in one-letter code: Sialic acid transporter NanX (405 aa).

Topologically, residues 1–20 (MATAWYKQVNPPQRKALFSA) are cytoplasmic. Residues 21-41 (WLGYVFDGFDFMMIFYILHII) form a helical membrane-spanning segment. Residues 42–53 (KADLGITDIQAT) are Periplasmic-facing. The chain crosses the membrane as a helical span at residues 54 to 74 (LIGTVAFIARPIGGGFFGAMA). At 75 to 80 (DKYGRK) the chain is on the cytoplasmic side. The helical transmembrane segment at 81 to 101 (PMMMWAIFIYSVGTGLSGIAT) threads the bilayer. A topological domain (periplasmic) is located at residue asparagine 102. Residues 103–123 (LYMLAVCRFIVGLGMSGEYAC) traverse the membrane as a helical segment. Residues 124–139 (ASTYAVESWPKNLQSK) are Cytoplasmic-facing. Residues 140–160 (ASAFLVSGFSVGNIIAAQIIP) form a helical membrane-spanning segment. The Periplasmic segment spans residues 161–164 (QFAE). A helical membrane pass occupies residues 165–185 (VYGWRNSFFIGLLPVLLVLWI). The Cytoplasmic portion of the chain corresponds to 186-214 (RKSAPESQEWIEDKYKDKSTFLSVFRKPH). A helical transmembrane segment spans residues 215–235 (LSISMIVFLVCFCLFGANWPI). At 236-250 (NGLLPSYLADNGVNT) the chain is on the periplasmic side. A helical membrane pass occupies residues 251–271 (VVISTLMTIAGLGTLTGTIFF). At 272-282 (GFVGDKIGVKK) the chain is on the cytoplasmic side. The helical transmembrane segment at 283–303 (AFVVGLITSFIFLCPLFFISV) threads the bilayer. The Periplasmic segment spans residues 304 to 307 (KNSS). The helical transmembrane segment at 308-328 (LIGLCLFGLMFTNLGIAGLVP) threads the bilayer. Topologically, residues 329–344 (KFIYDYFPTKLRGLGT) are cytoplasmic. The helical transmembrane segment at 345 to 365 (GLIYNLGATGGMAAPVLATYI) threads the bilayer. The Periplasmic segment spans residues 366–371 (SGYYGL). The helical transmembrane segment at 372–392 (GVSLFIVTVAFSALLILLVGF) threads the bilayer. Residues 393–405 (DIPGKIYKLSVAK) lie on the Cytoplasmic side of the membrane.

This sequence belongs to the major facilitator superfamily. Sugar transporter (TC 2.A.1.1) family.

The protein resides in the cell inner membrane. Probably transports across the inner membrane the two dehydrated forms of N-acetylneuraminate (Neu5Ac), 2,7-anhydro-N-acetylneuraminate (2,7-AN) and 2-deoxy-2,3-didehydro-N-acetylneuraminate (2,3-EN). This is Sialic acid transporter NanX from Escherichia coli (strain K12).